The chain runs to 162 residues: Ecotin (162 aa).

Positions 1 to 18 (MKMFVPAVVFAASASAWA) are cleaved as a signal peptide. C70 and C107 are joined by a disulfide.

The protein belongs to the protease inhibitor I11 (ecotin) family. As to quaternary structure, homodimer.

Its subcellular location is the periplasm. Functionally, general inhibitor of pancreatic serine proteases: inhibits chymotrypsin, trypsin, elastases, factor X, kallikrein as well as a variety of other proteases. The chain is Ecotin from Salmonella arizonae (strain ATCC BAA-731 / CDC346-86 / RSK2980).